The primary structure comprises 153 residues: NAD(P)H-quinone oxidoreductase subunit N (153 aa).

It belongs to the complex I NdhN subunit family. As to quaternary structure, NDH-1 can be composed of about 15 different subunits; different subcomplexes with different compositions have been identified which probably have different functions.

It localises to the cellular thylakoid membrane. It catalyses the reaction a plastoquinone + NADH + (n+1) H(+)(in) = a plastoquinol + NAD(+) + n H(+)(out). The enzyme catalyses a plastoquinone + NADPH + (n+1) H(+)(in) = a plastoquinol + NADP(+) + n H(+)(out). Functionally, NDH-1 shuttles electrons from an unknown electron donor, via FMN and iron-sulfur (Fe-S) centers, to quinones in the respiratory and/or the photosynthetic chain. The immediate electron acceptor for the enzyme in this species is believed to be plastoquinone. Couples the redox reaction to proton translocation, and thus conserves the redox energy in a proton gradient. Cyanobacterial NDH-1 also plays a role in inorganic carbon-concentration. This is NAD(P)H-quinone oxidoreductase subunit N from Synechococcus sp. (strain CC9311).